A 177-amino-acid chain; its full sequence is Putative pre-16S rRNA nuclease (177 aa).

Positions 1-20 (MVATQQGPDRPGIDDPGRGR) are disordered.

Belongs to the YqgF nuclease family.

It localises to the cytoplasm. In terms of biological role, could be a nuclease involved in processing of the 5'-end of pre-16S rRNA. This chain is Putative pre-16S rRNA nuclease, found in Rhodococcus erythropolis (strain PR4 / NBRC 100887).